A 96-amino-acid polypeptide reads, in one-letter code: MRKYEIMYIIRPGVEEEAQKALVERFAGVLTNNGAEIINTKEWGKRRLAYEINDLREGFYMILNVKSNAEAINEFDRLAKINEDILRHIVVKEEEK.

It belongs to the bacterial ribosomal protein bS6 family.

Binds together with bS18 to 16S ribosomal RNA. The protein is Small ribosomal subunit protein bS6 of Bacillus cereus (strain ATCC 10987 / NRS 248).